The primary structure comprises 682 residues: Methionine--tRNA ligase (682 aa).

A 'HIGH' region motif is present at residues 12-22; sequence PYANGAIHLGH. C143, C146, C156, and C159 together coordinate Zn(2+). Residues 328 to 332 carry the 'KMSKS' region motif; the sequence is KMSKS. K331 contributes to the ATP binding site. Positions 580-682 constitute a tRNA-binding domain; it reads DFAKLDLRVA…EGIRPGMQVK (103 aa).

The protein belongs to the class-I aminoacyl-tRNA synthetase family. MetG type 1 subfamily. As to quaternary structure, homodimer. Zn(2+) serves as cofactor.

It localises to the cytoplasm. The catalysed reaction is tRNA(Met) + L-methionine + ATP = L-methionyl-tRNA(Met) + AMP + diphosphate. Functionally, is required not only for elongation of protein synthesis but also for the initiation of all mRNA translation through initiator tRNA(fMet) aminoacylation. This chain is Methionine--tRNA ligase, found in Actinobacillus pleuropneumoniae serotype 7 (strain AP76).